We begin with the raw amino-acid sequence, 397 residues long: Lysophospholipid transporter LplT (397 aa).

The Periplasmic portion of the chain corresponds to 1–17; that stretch reads MSESVHTNTSLWSKGMK. A helical membrane pass occupies residues 18 to 38; sequence AVIVAQFLSAFGDNALLFATL. At 39–52 the chain is on the cytoplasmic side; that stretch reads ALLKAQFYPEWSQP. The chain crosses the membrane as a helical span at residues 53–73; sequence ILQMVFVGAYILFAPFVGQVA. Topologically, residues 74 to 90 are periplasmic; sequence DSFAKGRVMMFANGLKL. Residues 91 to 111 traverse the membrane as a helical segment; the sequence is LGAASICFGINPFLGYTLVGV. The Cytoplasmic segment spans residues 112–144; the sequence is GAAAYSPAKYGILGELTTGSKLVKANGLMEAST. Residues 145-165 form a helical membrane-spanning segment; the sequence is IAAILLGSVAGGVLADWHVLV. A topological domain (periplasmic) is located at residue A166. Residues 167 to 187 traverse the membrane as a helical segment; the sequence is LAACALAYGGAVVANIYIPKL. Over 188-226 the chain is Cytoplasmic; it reads AAARPGQSWNLINMTRSFLNACTSLWRNGETRFSLVGTS. A helical membrane pass occupies residues 227-247; sequence LFWGAGVTLRFLLVLWVPVAL. Residues 248-256 lie on the Periplasmic side of the membrane; it reads GITDNATPT. Residues 257–277 form a helical membrane-spanning segment; it reads YLNAMVAIGIVVGAGAAAKLV. The Cytoplasmic segment spans residues 278 to 280; that stretch reads TLE. A helical transmembrane segment spans residues 281–301; that stretch reads TVSRCMPAGILIGVVVLIFSL. The Periplasmic portion of the chain corresponds to 302 to 304; it reads QHE. Residues 305 to 325 form a helical membrane-spanning segment; that stretch reads LLPAYALLMLIGVMGGFFVVP. Residues 326 to 343 lie on the Cytoplasmic side of the membrane; sequence LNALLQERGKKSVGAGNA. A helical membrane pass occupies residues 344-364; the sequence is IAVQNLGENSAMLLMLGIYSL. Over 365–366 the chain is Periplasmic; the sequence is AV. The helical transmembrane segment at 367-387 threads the bilayer; that stretch reads MIGIPVVPIGIGFGALFALAI. The Cytoplasmic portion of the chain corresponds to 388–397; that stretch reads TALWIWQRRH.

It belongs to the major facilitator superfamily. LplT (TC 2.A.1.42) family.

The protein resides in the cell inner membrane. In terms of biological role, catalyzes the facilitated diffusion of 2-acyl-glycero-3-phosphoethanolamine (2-acyl-GPE) into the cell. The polypeptide is Lysophospholipid transporter LplT (Escherichia coli O8 (strain IAI1)).